The primary structure comprises 501 residues: MNAFKQREVWFAIGSQHLYGPQTLQQVKAHAEQVVDSLNREAGLPVKLVLKPLVTTPDEITALCRDANYQPQCIGILAWLHTFSPAKMWIAGLSVLHKPLLQFHTQFNAQVPWDSMDMDFMNLNQTAHGGREFGFIGARMRQQHSVIAGHWQDPEAHRRIGQWMRVASAKQAGQQLKVARFGDNMREVAVTDGDKVGAQIQFGYSVNAYGIGDLVSVINEVSRGDVDTLIEEYEASYVLSDAAKINGAKRENLTDAARIELGMKRFLEQGNFQAFTTNFEDLHGMKQLPGLAVQRLMQQGYGFGGEGDWKTAALLRILKVMADGLHGGTSFMEDYTYHFQPGNDLVVGSHMLEVCPSIAREPKPLLDIQPLGIGGKADPARLIFSTPAGPAVNASLIDMGDRFRLLVNQVDTVEQPHPLPKLPVARAIWRAQPTLATAAEAWILAGGAHHTVFSQALDADMLRLYAEMHNIEFLLIDQDTTLPAFKNELRWNEAYYQLNRR.

Positions 306, 333, 350, and 450 each coordinate Mn(2+).

This sequence belongs to the arabinose isomerase family. In terms of assembly, homohexamer. Requires Mn(2+) as cofactor.

It catalyses the reaction beta-L-arabinopyranose = L-ribulose. It participates in carbohydrate degradation; L-arabinose degradation via L-ribulose; D-xylulose 5-phosphate from L-arabinose (bacterial route): step 1/3. Functionally, catalyzes the conversion of L-arabinose to L-ribulose. This Serratia proteamaculans (strain 568) protein is L-arabinose isomerase.